Reading from the N-terminus, the 893-residue chain is MPLLLATTLANNSHHQHLSTTATETAAAAATAKAAATAAAAATATMLLTSPTAATHCLAAATSAAGVNVQITGQGVSATLNDDQLQLPANYAANVGHLNGFNPKDNCPPVPPTSERAFEGLLRLPQIQVKQEFMESPPERPSCHPMNHQQAPANSALATSCRGKTILNPWYLRPADGIGYHNYNSNNNNSGSGEINKDVSQQMTSACGGSDGQTCLPVSYFGMETLASVKQRQKSLPDFLIPLHEIMFQQQHHYQQRTMGTLINSLPPGLVGYPPQKTETFKSLTPPKALQHHQNNQNHQIPQNHTGDHSFVRHFHERDRLIREHQLKHQQLRDVEEVLQEQEQDEEQEHETLRKPHVVPSELEHNHHWHGVVCDANGHATRLLHIAPPRAGPTPLPTHQQPPVGEVLPPNSTSFSTIVDPPKEPSIYEQPAPNGRHCRPANKVMRHMSNSPTPPSPLRSLSDCGKSFEEEELELGENCEMPQNLSSKRQARELDSELENEVLDLAPPPKRLAEEQEEEKVASVNPPQPVAFAPEEMHQALQLQLHSYIEMVRQLAPEAFPNPNLATQFLLQNSLQALAQFQALQQMKQQQREDPLPSYSTPLAKSPLRSPSLSPVPRHSKSQQRTPPNSMTANSLGMSSAVMTPNTPSMQQQPQLQQSTPKPTSGLTVASAMAKLEQSPEETTDLEELEQFAKTFKQRRIKLGFTQGDVGLAMGKLYGNDFSQTTISRFEALNLSFKNMCKLKPLLQKWLEDADSTVAKSGGGVFNINTMTSTLSSTPESILGRRRKKRTSIETTVRTTLEKAFLMNCKPTSEEISQLSERLNMDKEVIRVWFCNRRQKEKRINPSLDLDSPTGTPLSSHAFGYPPQALNMSHMQMEGGSGSFCGSSISSGE.

The interval Gln586–Thr668 is disordered. The segment covering Pro602–Pro617 has biased composition (low complexity). Positions Gln623 to Asn646 are enriched in polar residues. Positions Thr647–Ser665 are enriched in low complexity. A POU-specific domain is found at Glu681–Asp755. The homeobox DNA-binding region spans Arg786–Asn845.

This sequence belongs to the POU transcription factor family. Class-2 subfamily. In terms of tissue distribution, initial expression in cellular blastoderm stage, then in ectodermal stripes during germband extension. Broad expression in the neuroectoderm followed by limitation to discrete subsets of CNS cells, and expression in specific PNS neurons and support cells.

Its subcellular location is the nucleus. Functionally, DNA-binding regulatory protein implicated in early development. Involved in neuronal cell fate decision. May act as an octamer-dependent activator of transcription. Could also play an early role in specific ectodermal cells, and a subsequent role in the embryonic nervous system. This is POU domain protein 2, isoform B from Drosophila melanogaster (Fruit fly).